The sequence spans 67 residues: Penaeidin-4c (67 aa).

The first 19 residues, 1–19, serve as a signal peptide directing secretion; it reads MRLVVCLVFLASFALVCQG. Cystine bridges form between cysteine 42/cysteine 56, cysteine 45/cysteine 63, and cysteine 57/cysteine 64. The residue at position 66 (arginine 66) is an Arginine amide.

Belongs to the penaeidin family.

It is found in the cytoplasmic granule. Antibacterial and antifungal activity. Presents chitin-binding activity. The protein is Penaeidin-4c of Penaeus vannamei (Whiteleg shrimp).